Reading from the N-terminus, the 225-residue chain is Chlorosome protein J (225 aa).

Positions 1-95 (MIIYINDKPC…TIRVLTRAEK (95 aa)) constitute a 2Fe-2S ferredoxin-type domain. [2Fe-2S] cluster is bound by residues C33, C39, C42, and C77.

It depends on [2Fe-2S] cluster as a cofactor.

The protein resides in the chlorosome. Could play a direct role in the oxidation or reduction of the quenching species formed in the chlorosome. In Chlorobaculum tepidum (strain ATCC 49652 / DSM 12025 / NBRC 103806 / TLS) (Chlorobium tepidum), this protein is Chlorosome protein J (csmJ).